We begin with the raw amino-acid sequence, 557 residues long: Ribonuclease J 2 (557 aa).

Residues H76, H78, H144, and E166 each coordinate Zn(2+). 366–370 serves as a coordination point for substrate; the sequence is HASSH.

The protein belongs to the metallo-beta-lactamase superfamily. RNA-metabolizing metallo-beta-lactamase-like family. Bacterial RNase J subfamily. Homodimer. Component of a possible RNA degradosome complex composed of cshA, eno, pfkA, pnp, rnjA, rnjB, rnpA and rny. Interacts specifically with RNase J1. Requires Zn(2+) as cofactor.

The protein resides in the cytoplasm. Functionally, an RNase that has 5'-3' exonuclease and endonuclease activity, with the exonuclease activity probably being most important in vivo. Involved in maturation of 16S rRNA, rnpB (the RNA component of RNase P) maturation and degradation, and mRNA maturation and/or decay. This subunit probably plays a structural rather than enzymatic role as mutation of its putative active site gives no phenotype, and its deletion is partially complemented by inactive RNase J1. The sequence is that of Ribonuclease J 2 from Staphylococcus aureus (strain NCTC 8325 / PS 47).